Consider the following 193-residue polypeptide: NADH-quinone oxidoreductase subunit B (193 aa).

Residues cysteine 72, cysteine 73, cysteine 137, and cysteine 167 each contribute to the [4Fe-4S] cluster site.

It belongs to the complex I 20 kDa subunit family. As to quaternary structure, NDH-1 is composed of 14 different subunits. Subunits NuoB, C, D, E, F, and G constitute the peripheral sector of the complex. Requires [4Fe-4S] cluster as cofactor.

It is found in the cell inner membrane. It carries out the reaction a quinone + NADH + 5 H(+)(in) = a quinol + NAD(+) + 4 H(+)(out). NDH-1 shuttles electrons from NADH, via FMN and iron-sulfur (Fe-S) centers, to quinones in the respiratory chain. The immediate electron acceptor for the enzyme in this species is believed to be ubiquinone. Couples the redox reaction to proton translocation (for every two electrons transferred, four hydrogen ions are translocated across the cytoplasmic membrane), and thus conserves the redox energy in a proton gradient. The chain is NADH-quinone oxidoreductase subunit B from Bartonella henselae (strain ATCC 49882 / DSM 28221 / CCUG 30454 / Houston 1) (Rochalimaea henselae).